Reading from the N-terminus, the 159-residue chain is Ribosomal RNA large subunit methyltransferase H (159 aa).

S-adenosyl-L-methionine contacts are provided by L76 and G108.

Belongs to the RNA methyltransferase RlmH family. Homodimer.

The protein resides in the cytoplasm. It carries out the reaction pseudouridine(1915) in 23S rRNA + S-adenosyl-L-methionine = N(3)-methylpseudouridine(1915) in 23S rRNA + S-adenosyl-L-homocysteine + H(+). Specifically methylates the pseudouridine at position 1915 (m3Psi1915) in 23S rRNA. This chain is Ribosomal RNA large subunit methyltransferase H, found in Levilactobacillus brevis (strain ATCC 367 / BCRC 12310 / CIP 105137 / JCM 1170 / LMG 11437 / NCIMB 947 / NCTC 947) (Lactobacillus brevis).